A 321-amino-acid polypeptide reads, in one-letter code: Annexin D3 (321 aa).

Alanine 2 is modified (N-acetylalanine). 4 Annexin repeats span residues 11 to 82 (PSPA…SWTY), 83 to 159 (DPAE…TLAS), 171 to 243 (EVAT…VAIF), and 247 to 318 (TPEK…TLLG). The Ca(2+) site is built by glycine 26, glycine 28, and glutamate 68. Residue threonine 117 is modified to Phosphothreonine. Ca(2+) is bound by residues isoleucine 260 and glycine 264. A Phosphotyrosine modification is found at tyrosine 289. Residue aspartate 304 participates in Ca(2+) binding.

It belongs to the annexin (TC 1.A.31.1) family. Expressed mainly in roots and flowers. Lower in stems and leaves.

The protein is Annexin D3 (ANN3) of Arabidopsis thaliana (Mouse-ear cress).